The sequence spans 279 residues: Chromatin modification-related protein EAF5 (279 aa).

The disordered stretch occupies residues 147-179; that stretch reads QLQPHANAGKSGSAGTSATITTTTPHMAHSMDP. Positions 154–170 are enriched in low complexity; it reads AGKSGSAGTSATITTTT.

This sequence belongs to the EAF5 family. In terms of assembly, component of the NuA4 histone acetyltransferase complex composed of at least ACT1, ARP4, YAF9, VID21, SWC4, EAF3, EAF5, EAF6, EAF7, EPL1, ESA1, TRA1 and YNG2.

Its subcellular location is the nucleus. In terms of biological role, component of the NuA4 histone acetyltransferase complex which is involved in transcriptional activation of selected genes principally by acetylation of nucleosomal histone H4 and H2A. The NuA4 complex is also involved in DNA repair. The polypeptide is Chromatin modification-related protein EAF5 (EAF5) (Saccharomyces cerevisiae (strain ATCC 204508 / S288c) (Baker's yeast)).